A 422-amino-acid polypeptide reads, in one-letter code: Cell division protein DivIB (422 aa).

Composition is skewed to basic and acidic residues over residues 1-23 (MVDWDKEAQRFRQRRQEAEKQEE) and 62-75 (EEAKGEDFAKDQEQ). The disordered stretch occupies residues 1-77 (MVDWDKEAQR…DFAKDQEQKH (77 aa)). At 1 to 109 (MVDWDKEAQR…LQLKSVSWSR (109 aa)) the chain is on the cytoplasmic side. A helical transmembrane segment spans residues 110–130 (LILAAAFLFMIIFSAFWLSPL). A POTRA domain is found at 131–202 (NRIATIEVSG…RTVEVNVQEF (72 aa)). At 131–422 (NRIATIEVSG…TVTQTRSSNS (292 aa)) the chain is on the extracellular side. The disordered stretch occupies residues 329–422 (NPLNDPFASP…TVTQTRSSNS (94 aa)). The segment covering 338 to 379 (PEEKASYQEKVDQAKEKSKEKQAKADKHSSESKLGDKPKPRG) has biased composition (basic and acidic residues). The span at 389–422 (TSSQRQTSSQSSPRPGTNSSQQSSTVTQTRSSNS) shows a compositional bias: low complexity.

Belongs to the FtsQ/DivIB family. DivIB subfamily.

Its subcellular location is the cell membrane. Cell division protein that may be involved in stabilizing or promoting the assembly of the division complex. In Aerococcus urinae (strain CCUG 59500 / ACS-120-V-Col10a), this protein is Cell division protein DivIB.